A 380-amino-acid chain; its full sequence is Cytochrome b (380 aa).

4 helical membrane passes run 34–54 (FGSL…LLAM), 78–99 (WLIR…YLHI), 114–134 (WNTG…GYVL), and 179–199 (FFAL…IHLT). The heme b site is built by His84 and His98. 2 residues coordinate heme b: His183 and His197. Residue His202 participates in a ubiquinone binding. Transmembrane regions (helical) follow at residues 227 to 247 (LKDI…ALFS), 289 to 309 (LGGV…PFLH), 321 to 341 (LSQL…WVGS), and 348 to 368 (FIII…ILFP).

The protein belongs to the cytochrome b family. The cytochrome bc1 complex contains 11 subunits: 3 respiratory subunits (MT-CYB, CYC1 and UQCRFS1), 2 core proteins (UQCRC1 and UQCRC2) and 6 low-molecular weight proteins (UQCRH/QCR6, UQCRB/QCR7, UQCRQ/QCR8, UQCR10/QCR9, UQCR11/QCR10 and a cleavage product of UQCRFS1). This cytochrome bc1 complex then forms a dimer. Heme b is required as a cofactor.

Its subcellular location is the mitochondrion inner membrane. Component of the ubiquinol-cytochrome c reductase complex (complex III or cytochrome b-c1 complex) that is part of the mitochondrial respiratory chain. The b-c1 complex mediates electron transfer from ubiquinol to cytochrome c. Contributes to the generation of a proton gradient across the mitochondrial membrane that is then used for ATP synthesis. The polypeptide is Cytochrome b (MT-CYB) (Macronectes giganteus (Southern giant petrel)).